Here is a 142-residue protein sequence, read N- to C-terminus: Cystatin-8 (142 aa).

An N-terminal signal peptide occupies residues 1–21 (MPRCRWLSLILLTIPLALVAR). N-linked (GlcNAc...) asparagine glycans are attached at residues Asn-27 and Asn-39. The Secondary area of contact signature appears at 77 to 81 (QVTNL). 2 disulfide bridges follow: Cys-95-Cys-105 and Cys-119-Cys-139.

Belongs to the cystatin family. Proximal caput region of the epididymis. Lower expression in the testis. Within the testis it is localized to the elongating spermatids, whereas within the epididymis it is exclusively synthesized by the proximal caput epithelium.

The protein resides in the secreted. Performs a specialized role during sperm development and maturation. The protein is Cystatin-8 (CST8) of Homo sapiens (Human).